Reading from the N-terminus, the 214-residue chain is Charged multivesicular body protein 2b (214 aa).

Positions Gln-25–Arg-55 form a coiled coil. Residues Met-178–Ile-199 are disordered. The short motif at Glu-202–Gly-212 is the MIT-interacting motif element.

It belongs to the SNF7 family. Probable core component of the endosomal sorting required for transport complex III (ESCRT-III). ESCRT-III components are thought to multimerize to form a flat lattice on the perimeter membrane of the endosome.

The protein localises to the cytoplasm. It localises to the cytosol. It is found in the late endosome membrane. In terms of biological role, probable core component of the endosomal sorting required for transport complex III (ESCRT-III) which is involved in multivesicular bodies (MVBs) formation and sorting of endosomal cargo proteins into MVBs. MVBs contain intraluminal vesicles (ILVs) that are generated by invagination and scission from the limiting membrane of the endosome and mostly are delivered to lysosomes enabling degradation of membrane proteins, such as stimulated growth factor receptors, lysosomal enzymes and lipids. The protein is Charged multivesicular body protein 2b (chmp2b) of Danio rerio (Zebrafish).